The chain runs to 227 residues: DNA mismatch repair protein MutH (227 aa).

This sequence belongs to the MutH family.

Its subcellular location is the cytoplasm. Sequence-specific endonuclease that cleaves unmethylated GATC sequences. It is involved in DNA mismatch repair. In Vibrio vulnificus (strain CMCP6), this protein is DNA mismatch repair protein MutH.